The chain runs to 733 residues: Forkhead box protein K1 (733 aa).

Ala-2 is subject to N-acetylalanine. An interaction with SIN3A and SIN3B region spans residues 2–40 (AEVGEDSGARALLALRSAPCSPVLCAAAAAAAFPAAAPP). The interval 36-79 (AAAPPPAPAQPQPPPGPPPPPPPPLPPGAIAGAGSSGGSSGVSG) is disordered. Positions 37–62 (AAPPPAPAQPQPPPGPPPPPPPPLPP) are enriched in pro residues. Positions 95-420 (AASVRQSPGP…PLSSRSAPAS (326 aa)) are required for interaction with FOXO4 and MEF2C. Ser-101 bears the Phosphoserine mark. The FHA domain occupies 123 to 175 (VTIGRNSSQGSVDLSMGLSSFISRRHLQLSFQEPHFYLRCLGKNGVFVDGAFQ). 2 positions are modified to omega-N-methylarginine: Arg-161 and Arg-191. A phosphoserine mark is found at Ser-213, Ser-223, Ser-239, and Ser-243. Residues Thr-245 and Thr-247 each carry the phosphothreonine modification. 4 positions are modified to phosphoserine: Ser-253, Ser-257, Ser-295, and Ser-299. Disordered stretches follow at residues 287–306 (ASEQ…ESKP) and 413–436 (SSRS…GLQT). The segment at residues 305–400 (KPPFSYAQLI…EQAFRKRRQR (96 aa)) is a DNA-binding region (fork-head). 2 positions are modified to phosphoserine: Ser-416 and Ser-420. Thr-422 carries the post-translational modification Phosphothreonine. At Ser-428 the chain carries Phosphoserine. Position 436 is a phosphothreonine (Thr-436). A phosphoserine mark is found at Ser-441, Ser-445, and Ser-459. Low complexity predominate over residues 676 to 697 (VAATATTTPATATTASASASST). The interval 676–733 (VAATATTTPATATTASASASSTGEPEVKRSRVEEPSGAVTTPAGVIAAAGPQGPGTGE) is disordered. Residues 700 to 709 (PEVKRSRVEE) are compositionally biased toward basic and acidic residues.

In terms of assembly, interacts with SIN3A and SIN3B (via PAH2) to form a complex which represses transcription. Component of SIN3A-, but not SIN3B-, containing multiprotein complexes. Interacts with FOXO4 and MEF2C; both interactions inhibit FOXO4 and MEF2C transactivation activity. Interacts (when phosphorylated) with YWHAE/14-3-3-epsilon; promotes sequestration in the cytoplasm and leads to impaired ability to bind DNA. Interacts with FHL2. Interacts with SRF. Interacts with DVL2 and DVL3; the interaction induces DVL2 nuclear translocation. Interacts with BAP1 (when phosphorylated). Accessory component of the polycomb repressive deubiquitinase (PR-DUB) complex, at least composed of BAP1, one of ASXL1, ASXL2 or (probably) ASXL3 and one of MBD5 or MBD6. The PR-DUB core associates with a number of accessory proteins, including FOXK1, FOXK2, KDM1B, HCFC1 and OGT. In terms of processing, phosphorylation by GSK3 (GSK3A or GSK3B) promotes interaction with YWHAE/14-3-3-epsilon and retention in the cytoplasm. In response to mTORC1 signaling, phosphorylation by GSK3 is prevented, leading to translocation to the nucleus. In terms of tissue distribution, expressed both developing and adult tissues. In adults, significant expression is seen in tumors of the brain, colon and lymph node.

The protein resides in the nucleus. The protein localises to the cytoplasm. In terms of biological role, transcriptional regulator involved in different processes such as glucose metabolism, aerobic glycolysis, muscle cell differentiation and autophagy. Recognizes and binds the forkhead DNA sequence motif (5'-GTAAACA-3') and can both act as a transcription activator or repressor, depending on the context. Together with FOXK2, acts as a key regulator of metabolic reprogramming towards aerobic glycolysis, a process in which glucose is converted to lactate in the presence of oxygen. Acts by promoting expression of enzymes for glycolysis (such as hexokinase-2 (HK2), phosphofructokinase, pyruvate kinase (PKLR) and lactate dehydrogenase), while suppressing further oxidation of pyruvate in the mitochondria by up-regulating pyruvate dehydrogenase kinases PDK1 and PDK4. Probably plays a role in gluconeogenesis during overnight fasting, when lactate from white adipose tissue and muscle is the main substrate. Involved in mTORC1-mediated metabolic reprogramming: in response to mTORC1 signaling, translocates into the nucleus and regulates the expression of genes associated with glycolysis and downstream anabolic pathways, such as HIF1A, thereby regulating glucose metabolism. Together with FOXK2, acts as a negative regulator of autophagy in skeletal muscle: in response to starvation, enters the nucleus, binds the promoters of autophagy genes and represses their expression, preventing proteolysis of skeletal muscle proteins. Acts as a transcriptional regulator of the myogenic progenitor cell population in skeletal muscle. Binds to the upstream enhancer region (CCAC box) of myoglobin (MB) gene, regulating the myogenic progenitor cell population. Promotes muscle progenitor cell proliferation by repressing the transcriptional activity of FOXO4, thereby inhibiting myogenic differentiation. Involved in remodeling processes of adult muscles that occur in response to physiological stimuli. Required to correct temporal orchestration of molecular and cellular events necessary for muscle repair. Represses myogenic differentiation by inhibiting MEFC activity. Positively regulates Wnt/beta-catenin signaling by translocating DVL into the nucleus. Reduces virus replication, probably by binding the interferon stimulated response element (ISRE) to promote antiviral gene expression. Accessory component of the polycomb repressive deubiquitinase (PR-DUB) complex; recruits the PR-DUB complex to specific FOXK1-bound genes. In Homo sapiens (Human), this protein is Forkhead box protein K1.